Consider the following 207-residue polypeptide: Large ribosomal subunit protein uL4 (207 aa).

The segment at 49-77 is disordered; the sequence is HAVKNRSAVRGGGKKPWRQKGTGRARQGS. Residues 60–71 show a composition bias toward basic residues; that stretch reads GGKKPWRQKGTG.

Belongs to the universal ribosomal protein uL4 family. In terms of assembly, part of the 50S ribosomal subunit.

One of the primary rRNA binding proteins, this protein initially binds near the 5'-end of the 23S rRNA. It is important during the early stages of 50S assembly. It makes multiple contacts with different domains of the 23S rRNA in the assembled 50S subunit and ribosome. Functionally, forms part of the polypeptide exit tunnel. In Levilactobacillus brevis (strain ATCC 367 / BCRC 12310 / CIP 105137 / JCM 1170 / LMG 11437 / NCIMB 947 / NCTC 947) (Lactobacillus brevis), this protein is Large ribosomal subunit protein uL4.